Consider the following 248-residue polypeptide: Coenzyme F420:L-glutamate ligase (248 aa).

Residues 15-18, 45-46, and Lys50 contribute to the GTP site; these read IPLI and ET. Asp115 contacts a divalent metal cation. Asn118 provides a ligand contact to GTP. Asp155, Ser156, and Gln213 together coordinate a divalent metal cation. Residue 211–218 coordinates GTP; it reads MGQSNEGI.

Belongs to the CofE family. In terms of assembly, homodimer. The cofactor is Mg(2+). Mn(2+) serves as cofactor. Requires K(+) as cofactor.

It catalyses the reaction oxidized coenzyme F420-0 + GTP + L-glutamate = oxidized coenzyme F420-1 + GDP + phosphate + H(+). It carries out the reaction oxidized coenzyme F420-1 + GTP + L-glutamate = oxidized coenzyme F420-2 + GDP + phosphate + H(+). It functions in the pathway cofactor biosynthesis; coenzyme F420 biosynthesis. Catalyzes the GTP-dependent successive addition of two or more gamma-linked L-glutamates to the L-lactyl phosphodiester of 7,8-didemethyl-8-hydroxy-5-deazariboflavin (F420-0) to form coenzyme F420-0-glutamyl-glutamate (F420-2) or polyglutamated F420 derivatives. This Methanococcus maripaludis (strain C7 / ATCC BAA-1331) protein is Coenzyme F420:L-glutamate ligase.